Reading from the N-terminus, the 842-residue chain is Glycogen phosphorylase, muscle form (842 aa).

An N-acetylserine modification is found at Ser2. The residue at position 15 (Ser15) is a Phosphoserine; by PHK; in form phosphorylase A. AMP-binding residues include Asp43 and Tyr76. A phosphotyrosine mark is found at Tyr204 and Tyr227. Arg310–Cys319 is an AMP binding site. The residue at position 430 (Ser430) is a Phosphoserine. Residue Tyr473 is modified to Phosphotyrosine. Position 514 is a phosphoserine (Ser514). Lys681 carries the N6-(pyridoxal phosphate)lysine modification. A phosphoserine mark is found at Ser747 and Ser748.

This sequence belongs to the glycogen phosphorylase family. As to quaternary structure, homodimer. Homotetramer; to form the enzymatically active phosphorylase A. Requires pyridoxal 5'-phosphate as cofactor. Post-translationally, phosphorylation of Ser-15 converts phosphorylase B (unphosphorylated) to phosphorylase A.

It carries out the reaction [(1-&gt;4)-alpha-D-glucosyl](n) + phosphate = [(1-&gt;4)-alpha-D-glucosyl](n-1) + alpha-D-glucose 1-phosphate. Allosterically regulated through the non-covalent binding of metabolites, being activated by AMP and inhibited by ATP, ADP, and glucose-6-phosphate. The activity is also controlled by post-translational modifications including phosphorylation. Functionally, allosteric enzyme that catalyzes the rate-limiting step in glycogen catabolism, the phosphorolytic cleavage of glycogen to produce glucose-1-phosphate, and plays a central role in maintaining cellular and organismal glucose homeostasis. This chain is Glycogen phosphorylase, muscle form, found in Macaca fascicularis (Crab-eating macaque).